The sequence spans 414 residues: WD repeat-containing protein jip5 (414 aa).

WD repeat units follow at residues 9–48 (PLSA…SDTD), 73–112 (RHKG…VENK), 118–159 (AKDG…SPVS), 222–263 (VSSV…DQDE), and 319–356 (DETE…DGMD). The disordered stretch occupies residues 39–65 (RLPSEESDTDGDGAESTSSSRNGKGHI). Residues 352–414 (SDGMDGDMAG…QDIMGFADID (63 aa)) form a disordered region. Positions 369–383 (DSDDSDDGDDSDDSD) are enriched in acidic residues.

This sequence belongs to the WD repeat WDR55 family.

Its subcellular location is the nucleus. The protein localises to the nucleolus. The sequence is that of WD repeat-containing protein jip5 (jip5) from Neosartorya fischeri (strain ATCC 1020 / DSM 3700 / CBS 544.65 / FGSC A1164 / JCM 1740 / NRRL 181 / WB 181) (Aspergillus fischerianus).